A 415-amino-acid chain; its full sequence is Phosphoglycerate kinase (415 aa).

The (2R)-3-phosphoglycerate site is built by V23, D24, F25, N26, Q39, R40, S63, H64, G66, R67, L122, R123, and R170. Residue G213 participates in ADP binding. G213 lines the CDP pocket. 2 residues coordinate AMP: A214 and K215. A214 contributes to the ATP binding site. A214 contacts Mg(2+). D218 is a binding site for CDP. A Mg(2+)-binding site is contributed by D218. An AMP-binding site is contributed by K219. K219 is a binding site for ATP. Residue G237 participates in ADP binding. G237 contacts CDP. AMP contacts are provided by G238 and G311. 2 residues coordinate ATP: G238 and G311. Residues G336 and F341 each coordinate CDP. ADP is bound at residue F341. Residue E342 participates in AMP binding. E342, D373, and T374 together coordinate ATP. Residue D373 participates in Mg(2+) binding.

Belongs to the phosphoglycerate kinase family. As to quaternary structure, monomer. The cofactor is Mg(2+).

The protein resides in the cytoplasm. Its subcellular location is the mitochondrion. It carries out the reaction (2R)-3-phosphoglycerate + ATP = (2R)-3-phospho-glyceroyl phosphate + ADP. Its pathway is carbohydrate degradation; glycolysis; pyruvate from D-glyceraldehyde 3-phosphate: step 2/5. Its function is as follows. Catalyzes one of the two ATP producing reactions in the glycolytic pathway via the reversible conversion of 1,3-diphosphoglycerate to 3-phosphoglycerate. Both L- and D- forms of purine and pyrimidine nucleotides can be used as substrates, but the activity is much lower on pyrimidines. Negatively regulates the biosynthesis of acetyl-CoA from pyruvate in the mitochondrion. This chain is Phosphoglycerate kinase (PGKA), found in Penicillium chrysogenum (Penicillium notatum).